Reading from the N-terminus, the 237-residue chain is (5-formylfuran-3-yl)methyl phosphate synthase (237 aa).

The active-site Schiff-base intermediate with substrate is the lysine 27. Catalysis depends on lysine 85, which acts as the Proton acceptor.

The protein belongs to the MfnB family.

It carries out the reaction 2 D-glyceraldehyde 3-phosphate = 4-(hydroxymethyl)-2-furancarboxaldehyde phosphate + phosphate + 2 H2O. It participates in cofactor biosynthesis; methanofuran biosynthesis. In terms of biological role, catalyzes the formation of 4-(hydroxymethyl)-2-furancarboxaldehyde phosphate (4-HFC-P) from two molecules of glyceraldehyde-3-P (GA-3-P). The polypeptide is (5-formylfuran-3-yl)methyl phosphate synthase (Methanobrevibacter smithii (strain ATCC 35061 / DSM 861 / OCM 144 / PS)).